Consider the following 346-residue polypeptide: UPF0283 membrane protein VIBHAR_01918 (346 aa).

A compositionally biased stretch (basic and acidic residues) spans 1 to 17 (MSELKQKQVFKEKVMHS). The tract at residues 1–28 (MSELKQKQVFKEKVMHSEEEDVSPELNT) is disordered. A run of 2 helical transmembrane segments spans residues 73-93 (LFATFAGLVVWQAVDSVITAI) and 98-118 (WLALGWVGFITTIASFGLGAL).

Belongs to the UPF0283 family.

It is found in the cell inner membrane. The polypeptide is UPF0283 membrane protein VIBHAR_01918 (Vibrio campbellii (strain ATCC BAA-1116)).